Consider the following 100-residue polypeptide: MLENSLILGAYLFCLGIYGLTTSRNMIRALMCLELMLNGVNINLVAFSSFLDPDKIRGQVFAIFIIAIAAAEAAIGLAIILNIFRNRNSIRIDQFNLLKW.

3 helical membrane-spanning segments follow: residues 1-21 (MLEN…YGLT), 30-50 (LMCL…FSSF), and 60-80 (VFAI…LAII).

It belongs to the complex I subunit 4L family. As to quaternary structure, NDH is composed of at least 16 different subunits, 5 of which are encoded in the nucleus.

It is found in the plastid. The protein localises to the chloroplast thylakoid membrane. The enzyme catalyses a plastoquinone + NADH + (n+1) H(+)(in) = a plastoquinol + NAD(+) + n H(+)(out). The catalysed reaction is a plastoquinone + NADPH + (n+1) H(+)(in) = a plastoquinol + NADP(+) + n H(+)(out). Functionally, NDH shuttles electrons from NAD(P)H:plastoquinone, via FMN and iron-sulfur (Fe-S) centers, to quinones in the photosynthetic chain and possibly in a chloroplast respiratory chain. The immediate electron acceptor for the enzyme in this species is believed to be plastoquinone. Couples the redox reaction to proton translocation, and thus conserves the redox energy in a proton gradient. In Staurastrum punctulatum (Green alga), this protein is NAD(P)H-quinone oxidoreductase subunit 4L, chloroplastic.